A 193-amino-acid polypeptide reads, in one-letter code: Putative 3-methyladenine DNA glycosylase (193 aa).

Belongs to the DNA glycosylase MPG family.

The polypeptide is Putative 3-methyladenine DNA glycosylase (Nitrosospira multiformis (strain ATCC 25196 / NCIMB 11849 / C 71)).